Reading from the N-terminus, the 408-residue chain is 3-phosphoshikimate 1-carboxyvinyltransferase (408 aa).

The 3-phosphoshikimate site is built by Lys20, Ser21, and Arg25. Lys20 lines the phosphoenolpyruvate pocket. Position 111 (Arg111) interacts with phosphoenolpyruvate. The 3-phosphoshikimate site is built by Ser151, Ser152, Gln153, Ser178, Asp293, and Lys320. Residue Gln153 participates in phosphoenolpyruvate binding. Asp293 serves as the catalytic Proton acceptor. Positions 324, 365, and 389 each coordinate phosphoenolpyruvate.

Belongs to the EPSP synthase family. In terms of assembly, monomer.

It is found in the cytoplasm. It catalyses the reaction 3-phosphoshikimate + phosphoenolpyruvate = 5-O-(1-carboxyvinyl)-3-phosphoshikimate + phosphate. Its pathway is metabolic intermediate biosynthesis; chorismate biosynthesis. Catalyzes the transfer of the enolpyruvyl moiety of phosphoenolpyruvate (PEP) to the 5-hydroxyl of shikimate-3-phosphate (S3P) to produce enolpyruvyl shikimate-3-phosphate and inorganic phosphate. The polypeptide is 3-phosphoshikimate 1-carboxyvinyltransferase (Sulfurisphaera tokodaii (strain DSM 16993 / JCM 10545 / NBRC 100140 / 7) (Sulfolobus tokodaii)).